The sequence spans 404 residues: Cysteine desulfurase IscS (404 aa).

Residues 75-76 (AT), asparagine 155, glutamine 183, and 203-205 (SGH) contribute to the pyridoxal 5'-phosphate site. Position 206 is an N6-(pyridoxal phosphate)lysine (lysine 206). Position 243 (threonine 243) interacts with pyridoxal 5'-phosphate. The Cysteine persulfide intermediate role is filled by cysteine 328. Cysteine 328 lines the [2Fe-2S] cluster pocket.

The protein belongs to the class-V pyridoxal-phosphate-dependent aminotransferase family. NifS/IscS subfamily. In terms of assembly, homodimer. Forms a heterotetramer with IscU, interacts with other sulfur acceptors. Pyridoxal 5'-phosphate serves as cofactor.

It localises to the cytoplasm. It catalyses the reaction (sulfur carrier)-H + L-cysteine = (sulfur carrier)-SH + L-alanine. It functions in the pathway cofactor biosynthesis; iron-sulfur cluster biosynthesis. In terms of biological role, master enzyme that delivers sulfur to a number of partners involved in Fe-S cluster assembly, tRNA modification or cofactor biosynthesis. Catalyzes the removal of elemental sulfur atoms from cysteine to produce alanine. Functions as a sulfur delivery protein for Fe-S cluster synthesis onto IscU, an Fe-S scaffold assembly protein, as well as other S acceptor proteins. This chain is Cysteine desulfurase IscS, found in Klebsiella pneumoniae (strain 342).